The following is a 118-amino-acid chain: Non-specific lipid-transfer protein 3 (118 aa).

The N-terminal stretch at 1–25 (MARSMNLACVALVMCMVVIAPMAEA) is a signal peptide. 4 disulfide bridges follow: Cys29–Cys76, Cys39–Cys53, Cys54–Cys99, and Cys74–Cys113.

It belongs to the plant LTP family.

In terms of biological role, plant non-specific lipid-transfer proteins transfer phospholipids as well as galactolipids across membranes. May play a role in wax or cutin deposition in the cell walls of expanding epidermal cells and certain secretory tissues. This chain is Non-specific lipid-transfer protein 3, found in Lens culinaris (Lentil).